We begin with the raw amino-acid sequence, 168 residues long: Transcription elongation factor GreB (168 aa).

A coiled-coil region spans residues Lys61–Val84.

This sequence belongs to the GreA/GreB family. GreB subfamily.

In terms of biological role, necessary for efficient RNA polymerase transcription elongation past template-encoded arresting sites. The arresting sites in DNA have the property of trapping a certain fraction of elongating RNA polymerases that pass through, resulting in locked ternary complexes. Cleavage of the nascent transcript by cleavage factors such as GreA or GreB allows the resumption of elongation from the new 3'terminus. GreB releases sequences of up to 9 nucleotides in length. The chain is Transcription elongation factor GreB from Pseudomonas aeruginosa (strain ATCC 15692 / DSM 22644 / CIP 104116 / JCM 14847 / LMG 12228 / 1C / PRS 101 / PAO1).